A 317-amino-acid polypeptide reads, in one-letter code: tRNA(Met) cytidine acetate ligase (317 aa).

Residues 6 to 19, G100, N157, and R182 each bind ATP; that span reads IAEY…HIYQ.

It belongs to the TmcAL family.

It localises to the cytoplasm. The catalysed reaction is cytidine(34) in elongator tRNA(Met) + acetate + ATP = N(4)-acetylcytidine(34) in elongator tRNA(Met) + AMP + diphosphate. Catalyzes the formation of N(4)-acetylcytidine (ac(4)C) at the wobble position of elongator tRNA(Met), using acetate and ATP as substrates. First activates an acetate ion to form acetyladenylate (Ac-AMP) and then transfers the acetyl group to tRNA to form ac(4)C34. This is tRNA(Met) cytidine acetate ligase from Mesomycoplasma hyopneumoniae (strain 232) (Mycoplasma hyopneumoniae).